The chain runs to 364 residues: Uroporphyrinogen decarboxylase (364 aa).

Coproporphyrinogen I is bound by residues Arg-34, Ala-36, Arg-38, Arg-47, Asp-83, Tyr-161, Ser-216, and His-336. Coproporphyrinogen III is bound by residues Arg-34, Ala-36, and Arg-38. Coproporphyrinogen III contacts are provided by Asp-83, Tyr-161, Ser-216, and His-336.

This sequence belongs to the uroporphyrinogen decarboxylase family. As to quaternary structure, homodimer.

It localises to the cytoplasm. Its subcellular location is the cytosol. It carries out the reaction uroporphyrinogen III + 4 H(+) = coproporphyrinogen III + 4 CO2. The enzyme catalyses uroporphyrinogen I + 4 H(+) = coproporphyrinogen I + 4 CO2. It functions in the pathway porphyrin-containing compound metabolism; protoporphyrin-IX biosynthesis; coproporphyrinogen-III from 5-aminolevulinate: step 4/4. Its function is as follows. Catalyzes the sequential decarboxylation of the four acetate side chains of uroporphyrinogen to form coproporphyrinogen and participates in the fifth step in the heme biosynthetic pathway. Isomer I or isomer III of uroporphyrinogen may serve as substrate, but only coproporphyrinogen III can ultimately be converted to heme. In vitro also decarboxylates pentacarboxylate porphyrinogen I. The sequence is that of Uroporphyrinogen decarboxylase from Rattus norvegicus (Rat).